The following is a 191-amino-acid chain: Reticulon-like protein B15 (191 aa).

The 179-residue stretch at 13–191 (VADLCLWKDK…SKIPRAPKVE (179 aa)) folds into the Reticulon domain. 3 consecutive transmembrane segments (helical) span residues 23-43 (INSG…EFME), 47-67 (VPLL…WAKF), and 122-142 (VAII…YICL).

It is found in the endoplasmic reticulum membrane. This Arabidopsis thaliana (Mouse-ear cress) protein is Reticulon-like protein B15 (RTNLB15).